Here is a 317-residue protein sequence, read N- to C-terminus: MGIDRRPLAIAVMGPTASGKTATAIALAKQLDGEIVSVDSALVYRHLDIGSAKPDAAERAQAPHHLLDLRDPWQTYSAAEFAADAGRVVADIVARGKTPILAGGTGLYFRALLQGLSPMPEADPVMREALSTEAAERGWAALHAELAKVDPAAAARIHATDPQRIQRALEVYRLTGTPISEWQRRPGVAPLPVRTLKLILAPRDRAVLHQRIEARFDAMLAQGFLDEVRALRAMPEMAAVTAPLDLPAVRAVGYRQAWEYLDGEGDAARFRDKAIFATRQLAKRQLTWLRGELDARWFDPHVDGERLAGAVSTFVAR.

14 to 21 (GPTASGKT) is an ATP binding site. 16–21 (TASGKT) provides a ligand contact to substrate. Interaction with substrate tRNA regions lie at residues 39-42 (DSAL) and 163-167 (QRIQR).

The protein belongs to the IPP transferase family. In terms of assembly, monomer. Mg(2+) serves as cofactor.

The catalysed reaction is adenosine(37) in tRNA + dimethylallyl diphosphate = N(6)-dimethylallyladenosine(37) in tRNA + diphosphate. In terms of biological role, catalyzes the transfer of a dimethylallyl group onto the adenine at position 37 in tRNAs that read codons beginning with uridine, leading to the formation of N6-(dimethylallyl)adenosine (i(6)A). The protein is tRNA dimethylallyltransferase of Stenotrophomonas maltophilia (strain K279a).